We begin with the raw amino-acid sequence, 209 residues long: Protein-L-isoaspartate O-methyltransferase (209 aa).

The active site involves Ser60.

It belongs to the methyltransferase superfamily. L-isoaspartyl/D-aspartyl protein methyltransferase family.

The protein resides in the cytoplasm. It carries out the reaction [protein]-L-isoaspartate + S-adenosyl-L-methionine = [protein]-L-isoaspartate alpha-methyl ester + S-adenosyl-L-homocysteine. Its function is as follows. Catalyzes the methyl esterification of L-isoaspartyl residues in peptides and proteins that result from spontaneous decomposition of normal L-aspartyl and L-asparaginyl residues. It plays a role in the repair and/or degradation of damaged proteins. The sequence is that of Protein-L-isoaspartate O-methyltransferase from Methanococcus vannielii (strain ATCC 35089 / DSM 1224 / JCM 13029 / OCM 148 / SB).